Here is a 406-residue protein sequence, read N- to C-terminus: DAZ-associated protein 1 (406 aa).

Methionine 1 is subject to N-acetylmethionine. 2 RRM domains span residues glycine 10–proline 97 and asparagine 113–proline 190. Positions threonine 74 to valine 117 are disordered. The span at glutamine 91 to lysine 111 shows a compositional bias: basic and acidic residues. At lysine 150 the chain carries N6-acetyllysine. The interval lysine 186–arginine 406 is disordered. The span at asparagine 195–glycine 207 shows a compositional bias: polar residues. The segment covering glycine 247 to phenylalanine 262 has biased composition (pro residues). Arginine 253 carries the post-translational modification Omega-N-methylarginine. Over residues phenylalanine 280–tyrosine 294 the composition is skewed to low complexity. A compositionally biased stretch (pro residues) spans glycine 295–threonine 315. The span at serine 363–proline 378 shows a compositional bias: low complexity. Residues glycine 379–arginine 392 show a composition bias toward gly residues.

In terms of assembly, interacts with DAZ and DAZL. In terms of processing, acetylation at Lys-150 is predominantly observed in the nuclear fraction, and may regulate nucleocytoplasmic transport. Mainly expressed in testis. Expressed at much lower level in liver, heart and brain. Also expressed in ovary. Expressed throughout testes development, in both the prenatal and postnatal periods.

Its subcellular location is the cytoplasm. The protein resides in the nucleus. Functionally, RNA-binding protein, which may be required during spermatogenesis. This chain is DAZ-associated protein 1 (Dazap1), found in Mus musculus (Mouse).